The following is a 556-amino-acid chain: Formate--tetrahydrofolate ligase 2 (556 aa).

65–72 (TPAGEGKS) is a binding site for ATP.

This sequence belongs to the formate--tetrahydrofolate ligase family.

It catalyses the reaction (6S)-5,6,7,8-tetrahydrofolate + formate + ATP = (6R)-10-formyltetrahydrofolate + ADP + phosphate. It participates in one-carbon metabolism; tetrahydrofolate interconversion. This chain is Formate--tetrahydrofolate ligase 2, found in Streptococcus sanguinis (strain SK36).